Reading from the N-terminus, the 53-residue chain is MLRYAIIFFVIAIIAAVFGFGGIAAGAAEIAKILFYIFVVIFLVTLLLGVVRR.

The next 2 helical transmembrane spans lie at 5–25 and 30–50; these read AIIF…GIAA and IAKI…LLGV.

Belongs to the UPF0391 family.

The protein resides in the cell membrane. The polypeptide is UPF0391 membrane protein BamMC406_6344 (Burkholderia ambifaria (strain MC40-6)).